Reading from the N-terminus, the 465-residue chain is Branched-chain amino acid permease BcaP (465 aa).

Transmembrane regions (helical) follow at residues 35 to 55 (LLGIGAIIGTGIFVLTGTGAV), 57 to 77 (AGPGLTISFVVAALACLFAAL), 103 to 123 (LMAFIIGWDLILEYMLAVSAV), 133 to 153 (SFLSGLGIHLPVALTAAPGAV), 159 to 179 (LFNLPAFVIVMAITYLLYLGI), 188 to 208 (IMVILKILVVLLFIAVAAVYV), 216 to 236 (FMPMGFGGVFSAAALVFFAFI), 258 to 278 (GIIFSLLVCTILYVTVSAIMT), 305 to 325 (VAGIIDIGAVLGMTTVMLVML), 355 to 375 (PYVATWFFGTMSALLGSLVPL), 380 to 400 (KLVNIGTLSAFVLISVAVIVL), 413 to 432 (CPGVPVIPGLAILFCLFLIL), and 437 to 456 (VTIVRFLVWLLIGLVIYFLY).

It belongs to the amino acid-polyamine-organocation (APC) superfamily.

Its subcellular location is the cell membrane. Its activity is regulated as follows. Isoleucine uptake is efficiently reduced in the presence of 100-fold excess valine, leucine, alanine, threonine, serine, cysteine, asparagine, and a nonproteinaceous amino acid 4-azaleucine. Branched-chain amino acid transport system which is involved in the uptake of isoleucine, valine and probably leucine. Can also transport threonine, and is active as a minor serine permease. May be an amino acid permease of rather broad specificity, because several amino acids, albeit at 100-fold excess, are able to prevent isoleucine uptake. Probably does not transport methionine. Together with BraB and BrnQ, plays an important role in the activation of CodY, a branched-chain amino acid-responsive transcriptional regulator that controls the expression of several dozen transcription units in B.subtilis. This is Branched-chain amino acid permease BcaP from Bacillus subtilis (strain 168).